A 201-amino-acid polypeptide reads, in one-letter code: Ependymin-related protein 2 (201 aa).

A signal peptide spans 1–21 (MILQVVLLLACLSGAIVSTGA). Residues Asn-38 and Asn-137 are each glycosylated (N-linked (GlcNAc...) asparagine). The short motif at 199–201 (CRA) is the Microbody targeting signal element.

The protein belongs to the ependymin family. In terms of tissue distribution, component of the acid-soluble and acid-insoluble organic matrix of calcified shell layers (at protein level).

It is found in the secreted. The sequence is that of Ependymin-related protein 2 from Haliotis asinina (Donkey's ear abalone).